We begin with the raw amino-acid sequence, 382 residues long: 3-ketosteroid-9-alpha-monooxygenase, oxygenase component (382 aa).

The 103-residue stretch at 20-122 (WHCLGLSRTF…TMEKHGQLFV (103 aa)) folds into the Rieske domain. 4 residues coordinate [2Fe-2S] cluster: C61, H63, C80, and H83. Fe cation-binding residues include N169, H175, H180, and D298.

Homotrimer. The two-component system 3-ketosteroid-9-alpha-monooxygenase is composed of an oxygenase component KshA and a reductase component KshB. [2Fe-2S] cluster serves as cofactor. The cofactor is Fe cation.

It catalyses the reaction androsta-1,4-diene-3,17-dione + 2 reduced [2Fe-2S]-[ferredoxin] + O2 + 2 H(+) = 9alpha-hydroxyandrosta-1,4-diene-3,17-dione + 2 oxidized [2Fe-2S]-[ferredoxin] + H2O. In terms of biological role, in vitro, catalyzes the introduction of a 9alpha-hydroxyl moiety into the ring B of 3-ketosteroid substrates such as 1,4-androstadiene-3,17-dione (ADD), 4-androstene-3,17-dione (AD), 4-androstene-17beta-ol-3-one (testosterone), 4-pregnene-3,20-dione (progesterone), 23,24-bisnorcholesta-4-ene-22-oate and 23,24-bisnorcholesta-1,4-diene-22-oate. This Rhodococcus rhodochrous protein is 3-ketosteroid-9-alpha-monooxygenase, oxygenase component.